Consider the following 37-residue polypeptide: Large ribosomal subunit protein bL36 (37 aa).

The protein belongs to the bacterial ribosomal protein bL36 family.

The chain is Large ribosomal subunit protein bL36 from Desulforapulum autotrophicum (strain ATCC 43914 / DSM 3382 / VKM B-1955 / HRM2) (Desulfobacterium autotrophicum).